Consider the following 145-residue polypeptide: Deoxyuridine 5'-triphosphate nucleotidohydrolase (145 aa).

Residues 63–65, Asn-76, 80–82, and Lys-90 each bind substrate; these read RSG and TID.

Belongs to the dUTPase family. Mg(2+) serves as cofactor.

The enzyme catalyses dUTP + H2O = dUMP + diphosphate + H(+). Its pathway is pyrimidine metabolism; dUMP biosynthesis; dUMP from dCTP (dUTP route): step 2/2. This enzyme is involved in nucleotide metabolism: it produces dUMP, the immediate precursor of thymidine nucleotides and it decreases the intracellular concentration of dUTP so that uracil cannot be incorporated into DNA. This chain is Deoxyuridine 5'-triphosphate nucleotidohydrolase, found in Clostridium acetobutylicum (strain ATCC 824 / DSM 792 / JCM 1419 / IAM 19013 / LMG 5710 / NBRC 13948 / NRRL B-527 / VKM B-1787 / 2291 / W).